A 131-amino-acid polypeptide reads, in one-letter code: Small ribosomal subunit protein uS11 (131 aa).

This sequence belongs to the universal ribosomal protein uS11 family. In terms of assembly, part of the 30S ribosomal subunit. Interacts with proteins S7 and S18. Binds to IF-3.

In terms of biological role, located on the platform of the 30S subunit, it bridges several disparate RNA helices of the 16S rRNA. Forms part of the Shine-Dalgarno cleft in the 70S ribosome. The sequence is that of Small ribosomal subunit protein uS11 from Clostridium acetobutylicum (strain ATCC 824 / DSM 792 / JCM 1419 / IAM 19013 / LMG 5710 / NBRC 13948 / NRRL B-527 / VKM B-1787 / 2291 / W).